We begin with the raw amino-acid sequence, 386 residues long: 1-deoxy-D-xylulose 5-phosphate reductoisomerase (386 aa).

NADPH contacts are provided by threonine 7, glycine 8, serine 9, isoleucine 10, alanine 33, and asparagine 124. Lysine 125 lines the 1-deoxy-D-xylulose 5-phosphate pocket. NADPH is bound at residue glutamate 126. Aspartate 148 lines the Mn(2+) pocket. 1-deoxy-D-xylulose 5-phosphate is bound by residues serine 149, glutamate 150, serine 174, and histidine 197. Mn(2+) is bound at residue glutamate 150. Residue glycine 203 participates in NADPH binding. 1-deoxy-D-xylulose 5-phosphate-binding residues include serine 210, asparagine 215, lysine 216, and glutamate 219. Glutamate 219 is a Mn(2+) binding site.

Belongs to the DXR family. Mg(2+) is required as a cofactor. Requires Mn(2+) as cofactor.

The catalysed reaction is 2-C-methyl-D-erythritol 4-phosphate + NADP(+) = 1-deoxy-D-xylulose 5-phosphate + NADPH + H(+). Its pathway is isoprenoid biosynthesis; isopentenyl diphosphate biosynthesis via DXP pathway; isopentenyl diphosphate from 1-deoxy-D-xylulose 5-phosphate: step 1/6. Its function is as follows. Catalyzes the NADPH-dependent rearrangement and reduction of 1-deoxy-D-xylulose-5-phosphate (DXP) to 2-C-methyl-D-erythritol 4-phosphate (MEP). The polypeptide is 1-deoxy-D-xylulose 5-phosphate reductoisomerase (Kitasatospora griseola (Streptomyces griseolosporeus)).